Here is a 315-residue protein sequence, read N- to C-terminus: Malate dehydrogenase (315 aa).

Residue 9-15 (GGSGNVG) participates in NAD(+) binding. Residues Arg-84 and Arg-90 each contribute to the substrate site. Residues Asn-97 and 120 to 122 (VSN) contribute to the NAD(+) site. Residues Asn-122 and Arg-153 each coordinate substrate. His-177 (proton acceptor) is an active-site residue.

It belongs to the LDH/MDH superfamily.

It carries out the reaction (S)-malate + NAD(+) = oxaloacetate + NADH + H(+). Catalyzes the reversible oxidation of malate to oxaloacetate. This Helicobacter hepaticus (strain ATCC 51449 / 3B1) protein is Malate dehydrogenase.